The following is a 527-amino-acid chain: Putative pumilio homolog 13 (527 aa).

A disordered region spans residues 22–51 (ENMTTAASSSQSQPPQMQSSKFHQPENHIH). Over residues 24 to 41 (MTTAASSSQSQPPQMQSS) the composition is skewed to low complexity. In terms of domain architecture, PUM-HD spans 184-527 (GVNNSWRSNE…GNKILEKLNI (344 aa)). Pumilio repeat units follow at residues 205–243 (SMENGRGSYFSIATDRVWSKELEKTIFVGTKETIDMIFD), 244–279 (GLIVGICELMVDPFGNDVVKLLIGKCSSEQIILIVD), 283–321 (RHISKFVNICFNPIGTLAIQVLLTSIHERANNQIPRIMD), 322–357 (AISSVALQLTRNTNAKYVILACFRMFTSSQCRRLLE), 358–396 (VVSQHCYQIAIDQNGCCLLQQCFDKERVPNHEIRQRLIS), 397–432 (EVIEHALKLCLNCHGNYVVQYVVELDNQHETDLLVN), 433–468 (KLLRNYAHLARNKYGSHVVQKLLKLRGIDSKLIVVD), and 469–503 (LLRGIDTLLLDPFGNYVIQTAWFVSKEDVRQMLRY).

Its subcellular location is the cytoplasm. In terms of biological role, sequence-specific RNA-binding protein that regulates translation and mRNA stability by binding the 3'-UTR of target mRNAs. The sequence is that of Putative pumilio homolog 13 (APUM13) from Arabidopsis thaliana (Mouse-ear cress).